The chain runs to 610 residues: Dihydroxy-acid dehydratase (610 aa).

Asp-81 contributes to the Mg(2+) binding site. A [2Fe-2S] cluster-binding site is contributed by Cys-122. Asp-123 and Lys-124 together coordinate Mg(2+). An N6-carboxylysine modification is found at Lys-124. Cys-196 serves as a coordination point for [2Fe-2S] cluster. Glu-492 is a binding site for Mg(2+). Ser-518 serves as the catalytic Proton acceptor.

Belongs to the IlvD/Edd family. As to quaternary structure, homodimer. [2Fe-2S] cluster is required as a cofactor. The cofactor is Mg(2+).

The catalysed reaction is (2R)-2,3-dihydroxy-3-methylbutanoate = 3-methyl-2-oxobutanoate + H2O. It catalyses the reaction (2R,3R)-2,3-dihydroxy-3-methylpentanoate = (S)-3-methyl-2-oxopentanoate + H2O. The protein operates within amino-acid biosynthesis; L-isoleucine biosynthesis; L-isoleucine from 2-oxobutanoate: step 3/4. It participates in amino-acid biosynthesis; L-valine biosynthesis; L-valine from pyruvate: step 3/4. Functions in the biosynthesis of branched-chain amino acids. Catalyzes the dehydration of (2R,3R)-2,3-dihydroxy-3-methylpentanoate (2,3-dihydroxy-3-methylvalerate) into 2-oxo-3-methylpentanoate (2-oxo-3-methylvalerate) and of (2R)-2,3-dihydroxy-3-methylbutanoate (2,3-dihydroxyisovalerate) into 2-oxo-3-methylbutanoate (2-oxoisovalerate), the penultimate precursor to L-isoleucine and L-valine, respectively. The sequence is that of Dihydroxy-acid dehydratase from Ruegeria pomeroyi (strain ATCC 700808 / DSM 15171 / DSS-3) (Silicibacter pomeroyi).